The primary structure comprises 356 residues: GTPase Obg (356 aa).

One can recognise an Obg domain in the interval 1–159 (MKFIDRVKIH…RWLRLELKLL (159 aa)). The OBG-type G domain occupies 160–331 (ADVGLLGMPN…LVAEVARELE (172 aa)). Residues 166–173 (GMPNAGKS), 191–195 (FTTLV), 213–216 (DIPG), 283–286 (SKID), and 312–314 (SAV) each bind GTP. Mg(2+) is bound by residues S173 and T193.

Belongs to the TRAFAC class OBG-HflX-like GTPase superfamily. OBG GTPase family. In terms of assembly, monomer. Mg(2+) serves as cofactor.

It is found in the cytoplasm. An essential GTPase which binds GTP, GDP and possibly (p)ppGpp with moderate affinity, with high nucleotide exchange rates and a fairly low GTP hydrolysis rate. Plays a role in control of the cell cycle, stress response, ribosome biogenesis and in those bacteria that undergo differentiation, in morphogenesis control. This chain is GTPase Obg, found in Syntrophotalea carbinolica (strain DSM 2380 / NBRC 103641 / GraBd1) (Pelobacter carbinolicus).